A 460-amino-acid chain; its full sequence is Endoglucanase C (460 aa).

The N-terminal stretch at 1 to 32 is a signal peptide; sequence MIKGSSLKRFKSLVMAAIFSVSIISTAIASSA. The Proton donor role is filled by Glu-99. Catalysis depends on Asp-155, which acts as the Nucleophile. Residues 400 to 460 enclose the Dockerin domain; sequence KPDLKGDVNN…FAQLKVKLLN (61 aa).

It belongs to the glycosyl hydrolase 8 (cellulase D) family. As to quaternary structure, monomer. There are two forms of the cellulase. The shorter form lacks probably the C-terminal reiterated domains.

The enzyme catalyses Endohydrolysis of (1-&gt;4)-beta-D-glucosidic linkages in cellulose, lichenin and cereal beta-D-glucans.. Its pathway is glycan metabolism; cellulose degradation. Its function is as follows. The biological conversion of cellulose to glucose generally requires three types of hydrolytic enzymes: (1) Endoglucanases which cut internal beta-1,4-glucosidic bonds; (2) Exocellobiohydrolases that cut the disaccharide cellobiose from the non-reducing end of the cellulose polymer chain; (3) Beta-1,4-glucosidases which hydrolyze the cellobiose and other short cello-oligosaccharides to glucose. The chain is Endoglucanase C (celCCC) from Ruminiclostridium cellulolyticum (strain ATCC 35319 / DSM 5812 / JCM 6584 / H10) (Clostridium cellulolyticum).